A 65-amino-acid chain; its full sequence is Hainantoxin-X.2 (65 aa).

Residues 1-20 (MNVKILVLVAVLCLVVSTHA) form the signal peptide. Residues 21–37 (ERHSKTDMEDSPMIQER) constitute a propeptide that is removed on maturation. 3 cysteine pairs are disulfide-bonded: cysteine 39–cysteine 56, cysteine 46–cysteine 59, and cysteine 55–cysteine 64.

This sequence belongs to the neurotoxin 36 family. 02 subfamily. In terms of tissue distribution, expressed by the venom gland.

It is found in the secreted. Its function is as follows. Reversibly blocks N-type calcium channels (Cav2.2/CACNA1B) in rat dorsal root ganglion cells. Elicits no toxic symptoms in either vertebrates or invertebrates during a period of 48 hours post-injection, when it was assayed in vivo by direct injection into mice and cockroaches. In Cyriopagopus hainanus (Chinese bird spider), this protein is Hainantoxin-X.2.